Consider the following 308-residue polypeptide: MIDRFGRPLEDLRITLTHVCNFECFFCHMEGEEGDNYILSKEDILLVAKVAKNFDINSVKLTGGEPTLRRDLVEIVRGLKQLGYRDVSMTTNGLLLKDLAYKLKLAGLDRINVSLHAISRETFKKITGVDAFDRVIEGIKSAIDVGLVPVKLNFVVNRRNREEVFKFIELSQNLGVNEIHLIELHPVGLGKLAFKEHDDLREIEEYIEKISIKKQIRKKHFRPRYVLPSGLIVEVIKPYANPIFCAGCNRIRLSVDGKLKTCLYREDNVIDILDILKGEYSEDVKEELLGRAFMIAIAIREPNFKYKI.

One can recognise a Radical SAM core domain in the interval 4–224 (RFGRPLEDLR…QIRKKHFRPR (221 aa)). Residue Arg-13 participates in GTP binding. [4Fe-4S] cluster is bound by residues Cys-20, Cys-24, and Cys-27. Residue Lys-60 coordinates GTP. Gly-64 is a binding site for S-adenosyl-L-methionine. Residue Thr-90 coordinates GTP. Ser-114 contributes to the S-adenosyl-L-methionine binding site. Lys-151 is a GTP binding site. [4Fe-4S] cluster-binding residues include Cys-245 and Cys-248. GTP is bound at residue 250–252 (RIR). [4Fe-4S] cluster is bound at residue Cys-262.

It belongs to the radical SAM superfamily. MoaA family. It depends on [4Fe-4S] cluster as a cofactor.

It carries out the reaction GTP + AH2 + S-adenosyl-L-methionine = (8S)-3',8-cyclo-7,8-dihydroguanosine 5'-triphosphate + 5'-deoxyadenosine + L-methionine + A + H(+). It participates in cofactor biosynthesis; molybdopterin biosynthesis. Functionally, catalyzes the cyclization of GTP to (8S)-3',8-cyclo-7,8-dihydroguanosine 5'-triphosphate. In Saccharolobus islandicus (strain Y.N.15.51 / Yellowstone #2) (Sulfolobus islandicus), this protein is Probable GTP 3',8-cyclase.